A 269-amino-acid chain; its full sequence is uncharacterized protein (269 aa).

Residues 5 to 73 form the HTH gntR-type domain; it reads APKWRELADR…RGHGTVVRRK (69 aa). The segment at residues 33–52 is a DNA-binding region (H-T-H motif); the sequence is IRDLVEAGEGSKETVHRAYK.

The imp locus inhibits the extrachromosomal maintenance of the Streptomyces plasmid SLP1. This is an uncharacterized protein from Streptomyces coelicolor (strain ATCC BAA-471 / A3(2) / M145).